Consider the following 308-residue polypeptide: Transaldolase (308 aa).

Lys125 serves as the catalytic Schiff-base intermediate with substrate.

Belongs to the transaldolase family. Type 1 subfamily. In terms of assembly, homodimer.

Its subcellular location is the cytoplasm. The enzyme catalyses D-sedoheptulose 7-phosphate + D-glyceraldehyde 3-phosphate = D-erythrose 4-phosphate + beta-D-fructose 6-phosphate. It functions in the pathway carbohydrate degradation; pentose phosphate pathway; D-glyceraldehyde 3-phosphate and beta-D-fructose 6-phosphate from D-ribose 5-phosphate and D-xylulose 5-phosphate (non-oxidative stage): step 2/3. Its function is as follows. Transaldolase is important for the balance of metabolites in the pentose-phosphate pathway. This chain is Transaldolase, found in Pseudomonas putida (strain ATCC 47054 / DSM 6125 / CFBP 8728 / NCIMB 11950 / KT2440).